The primary structure comprises 244 residues: uncharacterized protein (244 aa).

Residues 19-196 (ATDNRKLVIL…ACVIRYLKHL (178 aa)) form the FCP1 homology domain.

This is an uncharacterized protein from Schizosaccharomyces pombe (strain 972 / ATCC 24843) (Fission yeast).